Consider the following 299-residue polypeptide: tRNA pseudouridine synthase B (299 aa).

Asp38 (nucleophile) is an active-site residue.

This sequence belongs to the pseudouridine synthase TruB family. Type 1 subfamily.

The catalysed reaction is uridine(55) in tRNA = pseudouridine(55) in tRNA. Its function is as follows. Responsible for synthesis of pseudouridine from uracil-55 in the psi GC loop of transfer RNAs. This Alkaliphilus oremlandii (strain OhILAs) (Clostridium oremlandii (strain OhILAs)) protein is tRNA pseudouridine synthase B.